Here is a 500-residue protein sequence, read N- to C-terminus: Probable cytosol aminopeptidase (500 aa).

Mn(2+) contacts are provided by K268 and D273. Residue K280 is part of the active site. 3 residues coordinate Mn(2+): D291, D350, and E352. R354 is an active-site residue.

Belongs to the peptidase M17 family. Mn(2+) is required as a cofactor.

It is found in the cytoplasm. It catalyses the reaction Release of an N-terminal amino acid, Xaa-|-Yaa-, in which Xaa is preferably Leu, but may be other amino acids including Pro although not Arg or Lys, and Yaa may be Pro. Amino acid amides and methyl esters are also readily hydrolyzed, but rates on arylamides are exceedingly low.. It carries out the reaction Release of an N-terminal amino acid, preferentially leucine, but not glutamic or aspartic acids.. Its function is as follows. Presumably involved in the processing and regular turnover of intracellular proteins. Catalyzes the removal of unsubstituted N-terminal amino acids from various peptides. This chain is Probable cytosol aminopeptidase, found in Aromatoleum aromaticum (strain DSM 19018 / LMG 30748 / EbN1) (Azoarcus sp. (strain EbN1)).